The sequence spans 273 residues: Ribosomal RNA small subunit methyltransferase A (273 aa).

The S-adenosyl-L-methionine site is built by histidine 10, leucine 12, glycine 37, glutamate 58, aspartate 83, and asparagine 108.

Belongs to the class I-like SAM-binding methyltransferase superfamily. rRNA adenine N(6)-methyltransferase family. RsmA subfamily.

It localises to the cytoplasm. It carries out the reaction adenosine(1518)/adenosine(1519) in 16S rRNA + 4 S-adenosyl-L-methionine = N(6)-dimethyladenosine(1518)/N(6)-dimethyladenosine(1519) in 16S rRNA + 4 S-adenosyl-L-homocysteine + 4 H(+). Its function is as follows. Specifically dimethylates two adjacent adenosines (A1518 and A1519) in the loop of a conserved hairpin near the 3'-end of 16S rRNA in the 30S particle. May play a critical role in biogenesis of 30S subunits. The protein is Ribosomal RNA small subunit methyltransferase A of Picosynechococcus sp. (strain ATCC 27264 / PCC 7002 / PR-6) (Agmenellum quadruplicatum).